We begin with the raw amino-acid sequence, 375 residues long: Succinyl-diaminopimelate desuccinylase (375 aa).

His66 serves as a coordination point for Zn(2+). Asp68 is a catalytic residue. Asp99 contributes to the Zn(2+) binding site. Glu133 acts as the Proton acceptor in catalysis. Zn(2+) is bound by residues Glu134, Glu162, and His348.

Belongs to the peptidase M20A family. DapE subfamily. As to quaternary structure, homodimer. Requires Zn(2+) as cofactor. The cofactor is Co(2+).

It carries out the reaction N-succinyl-(2S,6S)-2,6-diaminopimelate + H2O = (2S,6S)-2,6-diaminopimelate + succinate. The protein operates within amino-acid biosynthesis; L-lysine biosynthesis via DAP pathway; LL-2,6-diaminopimelate from (S)-tetrahydrodipicolinate (succinylase route): step 3/3. Catalyzes the hydrolysis of N-succinyl-L,L-diaminopimelic acid (SDAP), forming succinate and LL-2,6-diaminopimelate (DAP), an intermediate involved in the bacterial biosynthesis of lysine and meso-diaminopimelic acid, an essential component of bacterial cell walls. In Salmonella typhi, this protein is Succinyl-diaminopimelate desuccinylase.